The following is a 445-amino-acid chain: N-succinylarginine dihydrolase (445 aa).

Substrate contacts are provided by residues 19-28 (AGLSFGNVAS), N110, and 137-138 (HR). Residue E174 is part of the active site. R214 provides a ligand contact to substrate. The active site involves H250. 2 residues coordinate substrate: D252 and N363. The active-site Nucleophile is the C369.

Belongs to the succinylarginine dihydrolase family. In terms of assembly, homodimer.

The enzyme catalyses N(2)-succinyl-L-arginine + 2 H2O + 2 H(+) = N(2)-succinyl-L-ornithine + 2 NH4(+) + CO2. The protein operates within amino-acid degradation; L-arginine degradation via AST pathway; L-glutamate and succinate from L-arginine: step 2/5. Catalyzes the hydrolysis of N(2)-succinylarginine into N(2)-succinylornithine, ammonia and CO(2). The protein is N-succinylarginine dihydrolase of Shewanella halifaxensis (strain HAW-EB4).